The sequence spans 143 residues: MKKILVLNGPNINMLGIREPAVYGNITLAEIEKSLSSLAKELKVEVEFFQSNHEGKIVDKIQDSINKIFGIIINPAALTHTSITIRDALSSISVPTIEVHISNIYAREEFRHKSYIAAEAIGQIAGLGIDGYLFALRKMVSLM.

The Proton acceptor role is filled by Tyr-23. 3 residues coordinate substrate: Asn-74, His-80, and Asp-87. His-100 acts as the Proton donor in catalysis. Substrate contacts are provided by residues 101–102 and Arg-111; that span reads IS.

It belongs to the type-II 3-dehydroquinase family. In terms of assembly, homododecamer.

It catalyses the reaction 3-dehydroquinate = 3-dehydroshikimate + H2O. It functions in the pathway metabolic intermediate biosynthesis; chorismate biosynthesis; chorismate from D-erythrose 4-phosphate and phosphoenolpyruvate: step 3/7. Its function is as follows. Catalyzes a trans-dehydration via an enolate intermediate. In Endomicrobium trichonymphae, this protein is 3-dehydroquinate dehydratase.